The primary structure comprises 400 residues: Tyrosine--tRNA ligase 2 (400 aa).

Positions 46-55 match the 'HIGH' region motif; that stretch reads PSAPDIHLGH. Residues 230-234 carry the 'KMSKS' region motif; sequence KMSKS. ATP is bound at residue K233. One can recognise an S4 RNA-binding domain in the interval 339–399; the sequence is NNLIEAIVKI…GKKKIVKLLV (61 aa).

The protein belongs to the class-I aminoacyl-tRNA synthetase family. TyrS type 2 subfamily. As to quaternary structure, homodimer.

It localises to the cytoplasm. It carries out the reaction tRNA(Tyr) + L-tyrosine + ATP = L-tyrosyl-tRNA(Tyr) + AMP + diphosphate + H(+). Its function is as follows. Catalyzes the attachment of tyrosine to tRNA(Tyr) in a two-step reaction: tyrosine is first activated by ATP to form Tyr-AMP and then transferred to the acceptor end of tRNA(Tyr). The chain is Tyrosine--tRNA ligase 2 from Clostridium acetobutylicum (strain ATCC 824 / DSM 792 / JCM 1419 / IAM 19013 / LMG 5710 / NBRC 13948 / NRRL B-527 / VKM B-1787 / 2291 / W).